A 254-amino-acid polypeptide reads, in one-letter code: tRNA (guanine-N(7)-)-methyltransferase (254 aa).

The span at 1–11 (MSISDNSREEL) shows a compositional bias: basic and acidic residues. The tract at residues 1-25 (MSISDNSREELGELPAGRPLQSEFN) is disordered. Residues Glu83, Glu108, Asp135, and Asp158 each coordinate S-adenosyl-L-methionine. Asp158 is a catalytic residue. Lys162 contacts substrate. The segment at 164–169 (RHNKRR) is interaction with RNA. Substrate contacts are provided by residues Asp194 and 232 to 235 (TKFE).

This sequence belongs to the class I-like SAM-binding methyltransferase superfamily. TrmB family.

The catalysed reaction is guanosine(46) in tRNA + S-adenosyl-L-methionine = N(7)-methylguanosine(46) in tRNA + S-adenosyl-L-homocysteine. It participates in tRNA modification; N(7)-methylguanine-tRNA biosynthesis. In terms of biological role, catalyzes the formation of N(7)-methylguanine at position 46 (m7G46) in tRNA. This is tRNA (guanine-N(7)-)-methyltransferase from Corynebacterium efficiens (strain DSM 44549 / YS-314 / AJ 12310 / JCM 11189 / NBRC 100395).